The following is a 234-amino-acid chain: Ubiquinone biosynthesis O-methyltransferase (234 aa).

Residues Arg39, Gly59, Asp80, and Met124 each coordinate S-adenosyl-L-methionine.

This sequence belongs to the methyltransferase superfamily. UbiG/COQ3 family.

It carries out the reaction a 3-demethylubiquinol + S-adenosyl-L-methionine = a ubiquinol + S-adenosyl-L-homocysteine + H(+). The catalysed reaction is a 3-(all-trans-polyprenyl)benzene-1,2-diol + S-adenosyl-L-methionine = a 2-methoxy-6-(all-trans-polyprenyl)phenol + S-adenosyl-L-homocysteine + H(+). The protein operates within cofactor biosynthesis; ubiquinone biosynthesis. O-methyltransferase that catalyzes the 2 O-methylation steps in the ubiquinone biosynthetic pathway. The protein is Ubiquinone biosynthesis O-methyltransferase of Aliivibrio fischeri (strain MJ11) (Vibrio fischeri).